Here is a 418-residue protein sequence, read N- to C-terminus: AP-3 complex subunit mu-2 (418 aa).

The 242-residue stretch at 176 to 417 (NNEAYFDVIE…MTKAGKFQVR (242 aa)) folds into the MHD domain.

This sequence belongs to the adaptor complexes medium subunit family. As to quaternary structure, AP-3 associates with the BLOC-1 complex. Adaptor protein complex 3 (AP-3) is a heterotetramer composed of two large adaptins (delta-type subunit AP3D1 and beta-type subunit AP3B1 or AP3B2), a medium adaptin (mu-type subunit AP3M1 or AP3M2) and a small adaptin (sigma-type subunit APS1 or AP3S2).

The protein resides in the golgi apparatus. The protein localises to the cytoplasmic vesicle membrane. Part of the AP-3 complex, an adaptor-related complex which is not clathrin-associated. The complex is associated with the Golgi region as well as more peripheral structures. It facilitates the budding of vesicles from the Golgi membrane and may be directly involved in trafficking to lysosomes. In concert with the BLOC-1 complex, AP-3 is required to target cargos into vesicles assembled at cell bodies for delivery into neurites and nerve terminals. This chain is AP-3 complex subunit mu-2 (AP3M2), found in Homo sapiens (Human).